The primary structure comprises 141 residues: Hemoglobin subunit alpha (141 aa).

The region spanning 1 to 141 (VLSSADKANI…VSTVLTSKYR (141 aa)) is the Globin domain. S3 is modified (phosphoserine). K7 and K11 each carry N6-succinyllysine. K16 is subject to N6-acetyllysine; alternate. The residue at position 16 (K16) is an N6-succinyllysine; alternate. The residue at position 24 (Y24) is a Phosphotyrosine. K40 bears the N6-succinyllysine mark. Phosphoserine is present on S49. H58 lines the O2 pocket. Residue H87 coordinates heme b. The residue at position 102 (S102) is a Phosphoserine. T108 is subject to Phosphothreonine. Residue S131 is modified to Phosphoserine. Residues T134 and T137 each carry the phosphothreonine modification. The residue at position 138 (S138) is a Phosphoserine.

The protein belongs to the globin family. In terms of assembly, heterotetramer of two alpha chains and two beta chains. In terms of tissue distribution, red blood cells.

Its function is as follows. Involved in oxygen transport from the lung to the various peripheral tissues. Hemopressin acts as an antagonist peptide of the cannabinoid receptor CNR1. Hemopressin-binding efficiently blocks cannabinoid receptor CNR1 and subsequent signaling. In Crocuta crocuta (Spotted hyena), this protein is Hemoglobin subunit alpha (HBA).